A 311-amino-acid chain; its full sequence is Phospho-N-acetylmuramoyl-pentapeptide-transferase (311 aa).

10 helical membrane passes run 2–22, 48–68, 74–94, 104–124, 144–164, 168–188, 192–212, 214–234, 237–257, and 288–308; these read ENNVIVFFLSFLSSVVFIEGF, GTPTAAGLVFIPIFIAVLLNF, SFLIAFSALSYGLIGAIDDFM, ITAVQKLFMQFTAAFIIVYFI, LGWFYYLLSSVVIVGVSNAVN, GVDGLAGFVFIGSIVPLLIVG, VVYLSLIGLLMGFLWHNWHPA, IFMGDAGSLALGGILATSFAL, LELFLIFFGFIFLLETLSVII, and KIAFRFSTLALLVSLLGIIGW.

This sequence belongs to the glycosyltransferase 4 family. MraY subfamily. Mg(2+) is required as a cofactor.

Its subcellular location is the cell inner membrane. It carries out the reaction UDP-N-acetyl-alpha-D-muramoyl-L-alanyl-gamma-D-glutamyl-meso-2,6-diaminopimeloyl-D-alanyl-D-alanine + di-trans,octa-cis-undecaprenyl phosphate = di-trans,octa-cis-undecaprenyl diphospho-N-acetyl-alpha-D-muramoyl-L-alanyl-D-glutamyl-meso-2,6-diaminopimeloyl-D-alanyl-D-alanine + UMP. Its pathway is cell wall biogenesis; peptidoglycan biosynthesis. Catalyzes the initial step of the lipid cycle reactions in the biosynthesis of the cell wall peptidoglycan: transfers peptidoglycan precursor phospho-MurNAc-pentapeptide from UDP-MurNAc-pentapeptide onto the lipid carrier undecaprenyl phosphate, yielding undecaprenyl-pyrophosphoryl-MurNAc-pentapeptide, known as lipid I. This chain is Phospho-N-acetylmuramoyl-pentapeptide-transferase, found in Kosmotoga olearia (strain ATCC BAA-1733 / DSM 21960 / TBF 19.5.1).